Reading from the N-terminus, the 135-residue chain is Small ribosomal subunit protein eS24A (135 aa).

S2 carries the N-acetylserine modification. At S14 the chain carries Phosphoserine. K21 participates in a covalent cross-link: Glycyl lysine isopeptide (Lys-Gly) (interchain with G-Cter in ubiquitin). S56 carries the phosphoserine modification. The interval 102–135 is disordered; the sequence is KASRQQRKQKKNRDKKIFGTGKRLAKKVARRNAD. Basic residues-rich tracts occupy residues 105–115 and 124–135; these read RQQRKQKKNRD and RLAKKVARRNAD.

It belongs to the eukaryotic ribosomal protein eS24 family. Component of the small ribosomal subunit (SSU). Mature yeast ribosomes consist of a small (40S) and a large (60S) subunit. The 40S small subunit contains 1 molecule of ribosomal RNA (18S rRNA) and 33 different proteins (encoded by 57 genes). The large 60S subunit contains 3 rRNA molecules (25S, 5.8S and 5S rRNA) and 46 different proteins (encoded by 81 genes). N-terminally acetylated by acetyltransferase NatA. Also partially acetylated by NatC.

The protein localises to the cytoplasm. In terms of biological role, component of the ribosome, a large ribonucleoprotein complex responsible for the synthesis of proteins in the cell. The small ribosomal subunit (SSU) binds messenger RNAs (mRNAs) and translates the encoded message by selecting cognate aminoacyl-transfer RNA (tRNA) molecules. The large subunit (LSU) contains the ribosomal catalytic site termed the peptidyl transferase center (PTC), which catalyzes the formation of peptide bonds, thereby polymerizing the amino acids delivered by tRNAs into a polypeptide chain. The nascent polypeptides leave the ribosome through a tunnel in the LSU and interact with protein factors that function in enzymatic processing, targeting, and the membrane insertion of nascent chains at the exit of the ribosomal tunnel. This Saccharomyces cerevisiae (strain ATCC 204508 / S288c) (Baker's yeast) protein is Small ribosomal subunit protein eS24A.